The chain runs to 75 residues: Porwaprin-d (75 aa).

The N-terminal stretch at 1-24 (MSSGGLLLLLGLLTLWAELTPVSS) is a signal peptide. Residues 27 to 72 (RPKKPGLCPPRPQKPPCVRECKNDWRCPGEQKCCRYGCIYECRDPI) form the WAP domain. 4 disulfides stabilise this stretch: Cys34/Cys60, Cys43/Cys64, Cys47/Cys59, and Cys53/Cys68.

The protein belongs to the venom waprin family. As to expression, expressed by the venom gland.

Its subcellular location is the secreted. Functionally, damages membranes of susceptible bacteria. Has no hemolytic activity. Not toxic to mice. Does not inhibit the proteinases elastase and cathepsin G. The polypeptide is Porwaprin-d (Pseudechis porphyriacus (Red-bellied black snake)).